The chain runs to 258 residues: Acetylglutamate kinase (258 aa).

Residues 41–42 (GG), Arg63, and Asn156 contribute to the substrate site.

The protein belongs to the acetylglutamate kinase family. ArgB subfamily.

It is found in the cytoplasm. It catalyses the reaction N-acetyl-L-glutamate + ATP = N-acetyl-L-glutamyl 5-phosphate + ADP. It functions in the pathway amino-acid biosynthesis; L-arginine biosynthesis; N(2)-acetyl-L-ornithine from L-glutamate: step 2/4. Its function is as follows. Catalyzes the ATP-dependent phosphorylation of N-acetyl-L-glutamate. The sequence is that of Acetylglutamate kinase from Bacillus licheniformis (strain ATCC 14580 / DSM 13 / JCM 2505 / CCUG 7422 / NBRC 12200 / NCIMB 9375 / NCTC 10341 / NRRL NRS-1264 / Gibson 46).